Consider the following 438-residue polypeptide: 3-phosphoshikimate 1-carboxyvinyltransferase (438 aa).

3-phosphoshikimate contacts are provided by lysine 25, serine 26, and arginine 30. Phosphoenolpyruvate is bound at residue lysine 25. Residues glycine 99 and arginine 128 each coordinate phosphoenolpyruvate. Residues serine 173, glutamine 175, aspartate 325, and lysine 352 each contribute to the 3-phosphoshikimate site. Residue glutamine 175 coordinates phosphoenolpyruvate. Catalysis depends on aspartate 325, which acts as the Proton acceptor. Residues arginine 356 and arginine 398 each contribute to the phosphoenolpyruvate site.

This sequence belongs to the EPSP synthase family. In terms of assembly, monomer.

Its subcellular location is the cytoplasm. It catalyses the reaction 3-phosphoshikimate + phosphoenolpyruvate = 5-O-(1-carboxyvinyl)-3-phosphoshikimate + phosphate. Its pathway is metabolic intermediate biosynthesis; chorismate biosynthesis; chorismate from D-erythrose 4-phosphate and phosphoenolpyruvate: step 6/7. Catalyzes the transfer of the enolpyruvyl moiety of phosphoenolpyruvate (PEP) to the 5-hydroxyl of shikimate-3-phosphate (S3P) to produce enolpyruvyl shikimate-3-phosphate and inorganic phosphate. The polypeptide is 3-phosphoshikimate 1-carboxyvinyltransferase (Prochlorococcus marinus subsp. pastoris (strain CCMP1986 / NIES-2087 / MED4)).